Here is a 367-residue protein sequence, read N- to C-terminus: Serine/threonine-protein kinase Sgk2 (367 aa).

Residues M1–A26 are disordered. Residue S10 is modified to Phosphoserine. Residues F35–F292 enclose the Protein kinase domain. Residues I41–V49 and K64 each bind ATP. Residues K68–S78 carry the Nuclear localization signal motif. The active-site Proton acceptor is D159. Residue T193 is modified to Phosphothreonine; by PDPK1. In terms of domain architecture, AGC-kinase C-terminal spans S293–C367. Phosphoserine is present on residues S334 and S356. Position 357 is a phosphotyrosine (Y357).

It belongs to the protein kinase superfamily. AGC Ser/Thr protein kinase family. In terms of processing, activated by phosphorylation on Ser-356 by an unknown kinase (may be mTORC2 but not confirmed), transforming it into a substrate for PDPK1 which then phosphorylates it on Thr-193. In terms of tissue distribution, highly expressed in liver, kidney and pancreas, and at lower levels in brain.

The protein localises to the cytoplasm. Its subcellular location is the nucleus. It catalyses the reaction L-seryl-[protein] + ATP = O-phospho-L-seryl-[protein] + ADP + H(+). The catalysed reaction is L-threonyl-[protein] + ATP = O-phospho-L-threonyl-[protein] + ADP + H(+). Its activity is regulated as follows. Two specific sites, one in the kinase domain (Thr-193) and the other in the C-terminal regulatory region (Ser-356), need to be phosphorylated for its full activation. Its function is as follows. Serine/threonine-protein kinase which is involved in the regulation of a wide variety of ion channels, membrane transporters, cell growth, survival and proliferation. Up-regulates Na(+) channels: SCNN1A/ENAC, K(+) channels: KCNA3/Kv1.3, KCNE1 and KCNQ1, amino acid transporter: SLC6A19, glutamate transporter: SLC1A6/EAAT4, glutamate receptors: GRIA1/GLUR1 and GRIK2/GLUR6, Na(+)/H(+) exchanger: SLC9A3/NHE3, and the Na(+)/K(+) ATPase. The polypeptide is Serine/threonine-protein kinase Sgk2 (SGK2) (Homo sapiens (Human)).